The following is a 215-amino-acid chain: MKTNLADIRKEYSSRSLDTKDILPSPVEQFRLWLNQALEAGALEATAMNLATVNEAGKPASRIVLLKGIEHGSFVFYTNYKSHKGSDITHNSFGALNFFWPELERQVRIEGKITKVSPEDSDTYFNSRPYQSKIGAWVSDQSKEVASREELESKITYYENKYPEGSVVPRPAHWGGYTLKPAYFEFWQGRPSRLHDRIVYDLEGDIRWNVFRICP.

Substrate contacts are provided by residues 9–12 (RKEY) and lysine 67. FMN contacts are provided by residues 62–67 (RIVLLK), 77–78 (YT), lysine 84, and glutamine 106. Substrate contacts are provided by tyrosine 124, arginine 128, and serine 132. Residues 141-142 (QS) and tryptophan 187 contribute to the FMN site. 193-195 (RLH) is a binding site for substrate. Arginine 197 provides a ligand contact to FMN.

Belongs to the pyridoxamine 5'-phosphate oxidase family. Homodimer. FMN serves as cofactor.

The catalysed reaction is pyridoxamine 5'-phosphate + O2 + H2O = pyridoxal 5'-phosphate + H2O2 + NH4(+). It catalyses the reaction pyridoxine 5'-phosphate + O2 = pyridoxal 5'-phosphate + H2O2. It functions in the pathway cofactor metabolism; pyridoxal 5'-phosphate salvage; pyridoxal 5'-phosphate from pyridoxamine 5'-phosphate: step 1/1. It participates in cofactor metabolism; pyridoxal 5'-phosphate salvage; pyridoxal 5'-phosphate from pyridoxine 5'-phosphate: step 1/1. Catalyzes the oxidation of either pyridoxine 5'-phosphate (PNP) or pyridoxamine 5'-phosphate (PMP) into pyridoxal 5'-phosphate (PLP). The protein is Pyridoxine/pyridoxamine 5'-phosphate oxidase of Cytophaga hutchinsonii (strain ATCC 33406 / DSM 1761 / CIP 103989 / NBRC 15051 / NCIMB 9469 / D465).